Reading from the N-terminus, the 741-residue chain is Phosphoribosylformylglycinamidine synthase subunit PurL (741 aa).

Residue His-54 is part of the active site. The ATP site is built by Tyr-57 and Lys-98. Position 100 (Glu-100) interacts with Mg(2+). Substrate contacts are provided by residues 101–104 and Arg-123; that span reads SHNH. His-102 serves as the catalytic Proton acceptor. Residue Asp-124 participates in Mg(2+) binding. Substrate is bound at residue Gln-251. Residue Asp-279 coordinates Mg(2+). 323-325 is a substrate binding site; sequence ESQ. ATP contacts are provided by Asp-510 and Gly-547. Asn-548 is a Mg(2+) binding site. Ser-550 contributes to the substrate binding site.

Belongs to the FGAMS family. In terms of assembly, monomer. Part of the FGAM synthase complex composed of 1 PurL, 1 PurQ and 2 PurS subunits.

It is found in the cytoplasm. It carries out the reaction N(2)-formyl-N(1)-(5-phospho-beta-D-ribosyl)glycinamide + L-glutamine + ATP + H2O = 2-formamido-N(1)-(5-O-phospho-beta-D-ribosyl)acetamidine + L-glutamate + ADP + phosphate + H(+). It functions in the pathway purine metabolism; IMP biosynthesis via de novo pathway; 5-amino-1-(5-phospho-D-ribosyl)imidazole from N(2)-formyl-N(1)-(5-phospho-D-ribosyl)glycinamide: step 1/2. Its function is as follows. Part of the phosphoribosylformylglycinamidine synthase complex involved in the purines biosynthetic pathway. Catalyzes the ATP-dependent conversion of formylglycinamide ribonucleotide (FGAR) and glutamine to yield formylglycinamidine ribonucleotide (FGAM) and glutamate. The FGAM synthase complex is composed of three subunits. PurQ produces an ammonia molecule by converting glutamine to glutamate. PurL transfers the ammonia molecule to FGAR to form FGAM in an ATP-dependent manner. PurS interacts with PurQ and PurL and is thought to assist in the transfer of the ammonia molecule from PurQ to PurL. In Picrophilus torridus (strain ATCC 700027 / DSM 9790 / JCM 10055 / NBRC 100828 / KAW 2/3), this protein is Phosphoribosylformylglycinamidine synthase subunit PurL.